Reading from the N-terminus, the 534-residue chain is MRLITRWIPLANALASTMPVQVVASIENPSLLPTPPMGFNNWARFMCDLNETLFVETTDAMASNGLLEAGYNRINLDDCWMNYDRAENGSLEWNVTKFPRGLPWLGQYVKSKGFNFGIYEDSGNLTCGGYPGSEGYEEIDAEIFAAWGIDYLKLDGCNVYPKEGRTLQEEYKYLYGNWHEILSKMQQPLIFSESAPAYFSMTDNLTDWHTVMDWVPEYGELARHSVDILVYSGEGSAWDSIMTNYKFNTLVARYQRPGYYNDPDFLIADHPGLSLDEKRSQFALWASFSAPLIISAHIPDLSSEDLEYLTNQALIAVDQDPLAQQATLASRDGSLDVLTRNLADGSRLVTILNHGSESIETDISLDILGLSTDCTYKAQDLWGGSTQTIKDAIRIKLNTHATAVYKIDTDEKCSQVIPTGLIFNTASGKCLTGTSSSVGSESCNGSKSQIWQIDASGVIRTLSEQSKCLTADGKAISLQECSENNGQKWSYAITGNLKNADTGYCLTNGGGVSACGFETNSQVFGLPAGVHVAL.

The N-terminal stretch at 1 to 25 (MRLITRWIPLANALASTMPVQVVAS) is a signal peptide. Cys-47 and Cys-79 are oxidised to a cystine. N-linked (GlcNAc...) asparagine glycans are attached at residues Asn-50, Asn-88, Asn-94, and Asn-124. Residues Cys-127 and Cys-157 are joined by a disulfide bond. Asp-155 acts as the Nucleophile in catalysis. Asn-204 is a glycosylation site (N-linked (GlcNAc...) asparagine). The active-site Proton donor is Asp-213. One can recognise a Ricin B-type lectin domain in the interval 413-534 (CSQVIPTGLI…GLPAGVHVAL (122 aa)). Cysteines 430 and 443 form a disulfide. Residue Asn-444 is glycosylated (N-linked (GlcNAc...) asparagine). A disulfide bridge links Cys-468 with Cys-481.

Belongs to the glycosyl hydrolase 27 family.

It localises to the secreted. It carries out the reaction Hydrolysis of terminal, non-reducing alpha-D-galactose residues in alpha-D-galactosides, including galactose oligosaccharides, galactomannans and galactolipids.. In terms of biological role, hydrolyzes a variety of simple alpha-D-galactoside as well as more complex molecules such as oligosaccharides and polysaccharides. In Aspergillus oryzae (strain ATCC 42149 / RIB 40) (Yellow koji mold), this protein is Probable alpha-galactosidase A (aglA).